The primary structure comprises 607 residues: Synaptotagmin-like protein 3 (607 aa).

Residues 4-123 (EVDLESFKEL…IKTGEWFFEE (120 aa)) enclose the RabBD domain. The tract at residues 221 to 279 (VGHTERRSQSDTAVNVTSRKASTPDILKAFHQEDPKHPPDPVLKQDTPPSSPTHSAVFS) is disordered. Polar residues predominate over residues 230-241 (SDTAVNVTSRKA). Residues 248 to 259 (KAFHQEDPKHPP) are compositionally biased toward basic and acidic residues. 2 C2 domains span residues 305–430 (VTGE…ARWY) and 458–590 (LPAG…LQWH).

Monomer. Binds NRXN1. Binds RAB27A that has been activated by GTP-binding via its N-terminus. As to expression, highly expressed in spleen and lung. Detected at lower levels in heart and testis.

Its subcellular location is the endomembrane system. Functionally, may act as Rab effector protein and play a role in vesicle trafficking. Binds phospholipids in the presence of calcium ions. This is Synaptotagmin-like protein 3 (Sytl3) from Mus musculus (Mouse).